A 212-amino-acid chain; its full sequence is ATP-dependent dethiobiotin synthetase BioD (212 aa).

12-17 (DCGKTF) contacts ATP. Thr16 is a Mg(2+) binding site. Lys33 is an active-site residue. Ser37 is a substrate binding site. ATP-binding positions include Asp50, 110 to 113 (EGAG), and 170 to 171 (NC). Residues Asp50 and Glu110 each coordinate Mg(2+).

The protein belongs to the dethiobiotin synthetase family. In terms of assembly, homodimer. Mg(2+) is required as a cofactor.

It is found in the cytoplasm. The enzyme catalyses (7R,8S)-7,8-diammoniononanoate + CO2 + ATP = (4R,5S)-dethiobiotin + ADP + phosphate + 3 H(+). Its pathway is cofactor biosynthesis; biotin biosynthesis; biotin from 7,8-diaminononanoate: step 1/2. In terms of biological role, catalyzes a mechanistically unusual reaction, the ATP-dependent insertion of CO2 between the N7 and N8 nitrogen atoms of 7,8-diaminopelargonic acid (DAPA, also called 7,8-diammoniononanoate) to form a ureido ring. This is ATP-dependent dethiobiotin synthetase BioD from Legionella pneumophila (strain Corby).